The chain runs to 115 residues: Large ribosomal subunit protein bL19 (115 aa).

This sequence belongs to the bacterial ribosomal protein bL19 family.

In terms of biological role, this protein is located at the 30S-50S ribosomal subunit interface and may play a role in the structure and function of the aminoacyl-tRNA binding site. The sequence is that of Large ribosomal subunit protein bL19 from Syntrophotalea carbinolica (strain DSM 2380 / NBRC 103641 / GraBd1) (Pelobacter carbinolicus).